Reading from the N-terminus, the 309-residue chain is Verprolin (309 aa).

Over residues 1–13 (MAPAPPPPPPAPA) the composition is skewed to pro residues. Residues 1-273 (MAPAPPPPPP…PNRVDDHGRF (273 aa)) are disordered. Residues 27–44 (DRSALLNSIQKGKKLKKA) form the WH2 domain. A compositionally biased stretch (polar residues) spans 82–91 (LPTSSNNTQQ). Positions 141-207 (TSAPPRPSIP…PPKVPPPPLS (67 aa)) are enriched in pro residues.

This sequence belongs to the verprolin family. Interacts with wsp1. Interacts with myo1 (via SH3 domain). Interacts with actin monomers.

The protein resides in the cytoplasm. It is found in the cytoskeleton. In terms of biological role, involved in cytoskeletal organization and cellular growth. May exert its effects on the cytoskeleton directly, or indirectly via proline-binding proteins such as profilin or proteins possessing SH3 domains. Plays a role in actin patch assembly by enhancing the ability of myo1 to stimulate actin polymerization by the Arp2/3 complex. In Schizosaccharomyces pombe (strain 972 / ATCC 24843) (Fission yeast), this protein is Verprolin.